The chain runs to 1389 residues: DNA-directed RNA polymerase subunit beta'' (1389 aa).

The Zn(2+) site is built by Cys220, Cys290, Cys297, and Cys300.

It belongs to the RNA polymerase beta' chain family. RpoC2 subfamily. In plastids the minimal PEP RNA polymerase catalytic core is composed of four subunits: alpha, beta, beta', and beta''. When a (nuclear-encoded) sigma factor is associated with the core the holoenzyme is formed, which can initiate transcription. Requires Zn(2+) as cofactor.

The protein localises to the plastid. It localises to the chloroplast. It catalyses the reaction RNA(n) + a ribonucleoside 5'-triphosphate = RNA(n+1) + diphosphate. Its function is as follows. DNA-dependent RNA polymerase catalyzes the transcription of DNA into RNA using the four ribonucleoside triphosphates as substrates. This chain is DNA-directed RNA polymerase subunit beta'', found in Chloranthus spicatus (Chulantree).